The chain runs to 445 residues: 3-phosphoshikimate 1-carboxyvinyltransferase (445 aa).

The segment at 1-25 (MTDSNQPMPLQARKSGALHGTARVP) is disordered. The 3-phosphoshikimate site is built by K28, S29, and R33. K28 is a binding site for phosphoenolpyruvate. Positions 101 and 129 each coordinate phosphoenolpyruvate. 3-phosphoshikimate is bound by residues S175, Q177, D328, and K355. Q177 is a binding site for phosphoenolpyruvate. D328 functions as the Proton acceptor in the catalytic mechanism. Positions 359 and 402 each coordinate phosphoenolpyruvate.

The protein belongs to the EPSP synthase family. As to quaternary structure, monomer.

Its subcellular location is the cytoplasm. The enzyme catalyses 3-phosphoshikimate + phosphoenolpyruvate = 5-O-(1-carboxyvinyl)-3-phosphoshikimate + phosphate. The protein operates within metabolic intermediate biosynthesis; chorismate biosynthesis; chorismate from D-erythrose 4-phosphate and phosphoenolpyruvate: step 6/7. Its function is as follows. Catalyzes the transfer of the enolpyruvyl moiety of phosphoenolpyruvate (PEP) to the 5-hydroxyl of shikimate-3-phosphate (S3P) to produce enolpyruvyl shikimate-3-phosphate and inorganic phosphate. The sequence is that of 3-phosphoshikimate 1-carboxyvinyltransferase from Rhodopseudomonas palustris (strain ATCC BAA-98 / CGA009).